The following is a 125-amino-acid chain: Holo-[acyl-carrier-protein] synthase (125 aa).

Mg(2+) contacts are provided by Asp-8 and Glu-57.

This sequence belongs to the P-Pant transferase superfamily. AcpS family. Mg(2+) serves as cofactor.

It is found in the cytoplasm. The enzyme catalyses apo-[ACP] + CoA = holo-[ACP] + adenosine 3',5'-bisphosphate + H(+). Transfers the 4'-phosphopantetheine moiety from coenzyme A to a Ser of acyl-carrier-protein. This chain is Holo-[acyl-carrier-protein] synthase, found in Nitrosomonas eutropha (strain DSM 101675 / C91 / Nm57).